The primary structure comprises 114 residues: Ferredoxin (114 aa).

Positions 9 and 17 each coordinate [3Fe-4S] cluster. 4 residues coordinate [4Fe-4S] cluster: Cys21, Cys40, Cys43, and Cys46. The 30-residue stretch at 31–60 (RMLYINPDECVDCGACKPACRVEAIYWEGD) folds into the 4Fe-4S ferredoxin-type domain. Cys50 contributes to the [3Fe-4S] cluster binding site.

[4Fe-4S] cluster is required as a cofactor. [3Fe-4S] cluster serves as cofactor.

Ferredoxins are iron-sulfur proteins that transfer electrons in a wide variety of metabolic reactions. The chain is Ferredoxin (fdxA) from Mycobacterium tuberculosis (strain ATCC 25618 / H37Rv).